Here is a 513-residue protein sequence, read N- to C-terminus: ATP synthase subunit alpha (513 aa).

Gly169–Thr176 lines the ATP pocket.

It belongs to the ATPase alpha/beta chains family. As to quaternary structure, F-type ATPases have 2 components, CF(1) - the catalytic core - and CF(0) - the membrane proton channel. CF(1) has five subunits: alpha(3), beta(3), gamma(1), delta(1), epsilon(1). CF(0) has three main subunits: a(1), b(2) and c(9-12). The alpha and beta chains form an alternating ring which encloses part of the gamma chain. CF(1) is attached to CF(0) by a central stalk formed by the gamma and epsilon chains, while a peripheral stalk is formed by the delta and b chains.

It is found in the cell inner membrane. The enzyme catalyses ATP + H2O + 4 H(+)(in) = ADP + phosphate + 5 H(+)(out). Its function is as follows. Produces ATP from ADP in the presence of a proton gradient across the membrane. The alpha chain is a regulatory subunit. This Ruegeria sp. (strain TM1040) (Silicibacter sp.) protein is ATP synthase subunit alpha.